The following is a 961-amino-acid chain: Rho guanine nucleotide exchange factor 2 (961 aa).

The segment at 12 to 59 adopts a Phorbol-ester/DAG-type zinc-finger fold; it reads GHLFTTISVSGMTMCYACNKSITAKEALICPTCNVTIHNRCKDTLANC. Ser82, Ser95, Ser102, Ser106, Ser110, Ser124, Ser136, Ser145, Ser147, and Ser150 each carry phosphoserine. Positions 104 to 134 are interaction with DYNLT1; that stretch reads RQSLLGSRRGRSPLSLAKSVSTTNIAGHFND. One can recognise a DH domain in the interval 209–406; that stretch reads KQQDVIYELI…KELLSNVDQD (198 aa). Lys327 carries the N6-acetyllysine modification. The PH domain occupies 446–545; the sequence is KLIHDGCLLW…WIRVIQQSVR (100 aa). Residues 561-588 are a coiled coil; sequence EAYLRRIKMELQQKDRALVELLQEKVGL. 2 positions are modified to phosphoserine: Ser619 and Ser622. Residue Thr653 is modified to Phosphothreonine; by MAPK1 or MAPK3. The disordered stretch occupies residues 659–679; that stretch reads LPVETDSGGNTSPGVTANGEA. Residues Ser665, Ser670, Ser685, and Ser756 each carry the phosphoserine modification. Residues 742–761 show a composition bias toward basic and acidic residues; sequence PEGPERREKLTRANSRDGEA. The disordered stretch occupies residues 742-770; that stretch reads PEGPERREKLTRANSRDGEAGRAGAAPVA. Residues 772–841 are a coiled coil; that stretch reads EKQATELALL…RQLAALGHTE (70 aa). The residue at position 860 (Ser860) is a Phosphoserine; by PAK1 and AURKA. Positions 867 to 961 are disordered; the sequence is LYLSFTPPQP…RDGEPVASES (95 aa). Phosphotyrosine is present on Tyr868. Position 870 is a phosphoserine; by PAK4 (Ser870). A compositionally biased stretch (basic and acidic residues) spans 894-913; sequence RPFEDRERQELGSPDERLQD. 3 positions are modified to phosphoserine: Ser906, Ser914, and Ser915. Residues 915 to 925 show a composition bias toward acidic residues; sequence SDPDTGSEEEG. Residue Thr919 is modified to Phosphothreonine. 4 positions are modified to phosphoserine: Ser921, Ser927, Ser928, and Ser931. At Ser935 the chain carries Phosphoserine; by CDK1.

In terms of assembly, found in a complex composed at least of ARHGEF2, NOD2 and RIPK2. Interacts with RIPK2; the interaction mediates tyrosine phosphorylation of RIPK2 by Src kinase CSK. Interacts with RIPK1 and RIPK3. Interacts with YWHAZ/14-3-3 zeta; when phosphorylated at Ser-860. Interacts with the kinases PAK4, AURKA and MAPK1. Interacts with RHOA and RAC1. Interacts with NOD1. Interacts (via the N- terminal zinc finger) with CAPN6 (via domain II). Interacts with DYNLT1. Post-translationally, phosphorylation of Ser-860 by PAK1 induces binding to protein YWHAZ, promoting its relocation to microtubules and the inhibition of its activity. Phosphorylated by AURKA and CDK1 during mitosis, which negatively regulates its activity. Phosphorylation by MAPK1 or MAPK3 increases nucleotide exchange activity. Phosphorylation by PAK4 releases GEF-H1 from the microtubules. Phosphorylated on serine, threonine and tyrosine residues in a RIPK2-dependent manner.

The protein resides in the cytoplasm. The protein localises to the cytoskeleton. It is found in the cell junction. It localises to the tight junction. Its subcellular location is the golgi apparatus. The protein resides in the spindle. The protein localises to the cytoplasmic vesicle. Functionally, activates Rho-GTPases by promoting the exchange of GDP for GTP. May be involved in epithelial barrier permeability, cell motility and polarization, dendritic spine morphology, antigen presentation, leukemic cell differentiation, cell cycle regulation, innate immune response, and cancer. Binds Rac-GTPases, but does not seem to promote nucleotide exchange activity toward Rac-GTPases. May stimulate instead the cortical activity of Rac. Inactive toward CDC42, TC10, or Ras-GTPases. Forms an intracellular sensing system along with NOD1 for the detection of microbial effectors during cell invasion by pathogens. Involved in innate immune signaling transduction pathway promoting cytokine IL6/interleukin-6 and TNF-alpha secretion in macrophage upon stimulation by bacterial peptidoglycans; acts as a signaling intermediate between NOD2 receptor and RIPK2 kinase. Contributes to the tyrosine phosphorylation of RIPK2 through Src tyrosine kinase leading to NF-kappaB activation by NOD2. Overexpression activates Rho-, but not Rac-GTPases, and increases paracellular permeability. Involved in neuronal progenitor cell division and differentiation. Involved in the migration of precerebellar neurons. The protein is Rho guanine nucleotide exchange factor 2 (ARHGEF2) of Sus scrofa (Pig).